The following is a 206-amino-acid chain: Putative 3-methyladenine DNA glycosylase (206 aa).

Belongs to the DNA glycosylase MPG family.

This Rhodopseudomonas palustris (strain ATCC BAA-98 / CGA009) protein is Putative 3-methyladenine DNA glycosylase.